Reading from the N-terminus, the 161-residue chain is Nucleotide-binding protein Sfri_0732 (161 aa).

The protein belongs to the YajQ family.

Functionally, nucleotide-binding protein. In Shewanella frigidimarina (strain NCIMB 400), this protein is Nucleotide-binding protein Sfri_0732.